The chain runs to 687 residues: Protein white (687 aa).

The disordered stretch occupies residues Met1 to Ala30. The Cytoplasmic portion of the chain corresponds to Met1 to Arg419. The 249-residue stretch at Asn93–Thr341 folds into the ABC transporter domain. Gly130–Thr137 is a binding site for ATP. Residues Ser420–Met440 form a helical membrane-spanning segment. The Extracellular segment spans residues Val441 to Met460. A helical transmembrane segment spans residues Asn461–Thr481. Topologically, residues Ile482–Arg497 are cytoplasmic. Residues Ser498–Phe518 form a helical membrane-spanning segment. Residues Leu519–Pro531 are Extracellular-facing. Residues Met532–Val552 traverse the membrane as a helical segment. Over Ala553–Ser568 the chain is Cytoplasmic. Residues Ser569 to Gly589 traverse the membrane as a helical segment. Residues Phe590–Lys644 lie on the Extracellular side of the membrane. Asn636 carries an N-linked (GlcNAc...) asparagine glycan. The chain crosses the membrane as a helical span at residues Val645 to Ala665. Topologically, residues Ile666–Ala675 are cytoplasmic.

It belongs to the ABC transporter superfamily. ABCG family. Eye pigment precursor importer (TC 3.A.1.204) subfamily. In terms of assembly, may form a heterodimer with bw/brown. May form a heterodimer with st/scarlet. Expressed in the head (at protein level). Expressed in the eye, specifically in retina primary pigment cells, in the basement membrane of the base of secondary and tertiary pigment cells, and in retinula cells (at protein level). Expressed in the retina underlying lamina in the epithelial glia that surrounds the array of lamina cartridges (at protein level). Weakly expressed in photoreceptors, specifically in terminals of R1-R6, R7 and R8 (at protein level). Expressed at very low levels in medulla and central brain (at protein level). Expressed in principal cells of the Malpighian tubules.

It localises to the cytoplasmic vesicle membrane. The catalysed reaction is 3',5'-cyclic GMP(in) + ATP + H2O = 3',5'-cyclic GMP(out) + ADP + phosphate + H(+). It catalyses the reaction guanine(out) + ATP + H2O = guanine(in) + ADP + phosphate + H(+). It carries out the reaction riboflavin(in) + ATP + H2O = riboflavin(out) + ADP + phosphate + H(+). The enzyme catalyses (6S)-5,6,7,8-tetrahydrofolate(out) + ATP + H2O = (6S)-5,6,7,8-tetrahydrofolate(in) + ADP + phosphate + H(+). The catalysed reaction is L-tryptophan(out) + ATP + H2O = L-tryptophan(in) + ADP + phosphate + H(+). It catalyses the reaction L-kynurenine(out) + ATP + H2O = L-kynurenine(in) + ADP + phosphate + H(+). It carries out the reaction xanthine(out) + ATP + H2O = xanthine(in) + ADP + phosphate + H(+). Functionally, ATP-dependent transporter of the ATP-binding cassette (ABC) family which transports various molecules including bioamines, neurotransmitters, metabolic intermediates and second messengers. In the eye, required for the transport of the eye red and brown pigment precursors, guanine and tryptophan, into pigment cell granules. Probably in association with bw/brown, involved in the transport of guanine. Probably in association with st/scarlet involved in the transport of kynurenine and probably tryptophan. Involved in the transport of kynurenine in pupal eyes. May play a role in histamine uptake by the lamina epithelial glia which surrounds photoreceptors R1-R6. In Malpighian tubules, involved in the transport of cGMP, guanine, xanthine, riboflavin, kynurenine and tryptophan. Probably in association with br/brown, involved in aging-induced intestinal stem cell proliferation in the midgut by regulating tetrahydrofolate transport. Probably in association with st/scarlet, plays a role in zinc storage granule biogenesis in Malpighian tubule principal epithelial cells. This Drosophila melanogaster (Fruit fly) protein is Protein white.